A 1336-amino-acid chain; its full sequence is Probable ATP-dependent DNA helicase HFM1 (1336 aa).

In terms of domain architecture, Helicase ATP-binding spans 159 to 347; it reads EHLLYSDRNF…WLSDENSPGV (189 aa). Position 172 to 179 (172 to 179) interacts with ATP; it reads APTGSGKT. The DEAH box signature appears at 280–283; that stretch reads DEVH. One can recognise a Helicase C-terminal domain in the interval 388 to 589; that stretch reads NIIQTYSDGR…DVKVALEWIR (202 aa). The SEC63 domain maps to 646–961; that stretch reads PTETGKLMAL…GLDIQQSFNI (316 aa). The segment at 1016 to 1031 adopts a C4-type zinc-finger fold; that stretch reads CNHNCKNKDACGHECC.

The protein belongs to the helicase family. SKI2 subfamily. It depends on Zn(2+) as a cofactor.

It carries out the reaction Couples ATP hydrolysis with the unwinding of duplex DNA by translocating in the 3'-5' direction.. It catalyses the reaction ATP + H2O = ADP + phosphate + H(+). Required for crossover formation and complete synapsis of homologous chromosomes during meiosis. In Xenopus tropicalis (Western clawed frog), this protein is Probable ATP-dependent DNA helicase HFM1 (hfm1).